Reading from the N-terminus, the 476-residue chain is Probable protein S-acyltransferase 5 (476 aa).

The span at Met1–His11 shows a compositional bias: basic and acidic residues. The interval Met1–Ser21 is disordered. Transmembrane regions (helical) follow at residues Ser53–Gly73 and Gly85–Leu105. Positions Tyr119–Pro138 are disordered. Residues Lys158 to Leu208 form the DHHC domain. The active-site S-palmitoyl cysteine intermediate is Cys188. The next 2 helical transmembrane spans lie at Cys209–Ile223 and Ser246–Phe266. 2 disordered regions span residues Ser320–Gln340 and Val373–Asp454. Phosphoserine is present on Ser336. Basic and acidic residues predominate over residues Ser387–Arg412. Ser418 is subject to Phosphoserine. The span at Val425–Glu441 shows a compositional bias: basic and acidic residues.

The protein belongs to the DHHC palmitoyltransferase family.

It is found in the cell membrane. The enzyme catalyses L-cysteinyl-[protein] + hexadecanoyl-CoA = S-hexadecanoyl-L-cysteinyl-[protein] + CoA. Palmitoyl acyltransferase. This Arabidopsis thaliana (Mouse-ear cress) protein is Probable protein S-acyltransferase 5 (PAT05).